The following is a 262-amino-acid chain: Hemin import ATP-binding protein HmuV (262 aa).

The 242-residue stretch at 3-244 folds into the ABC transporter domain; it reads LQARNLTLAR…DHMRRVYGIE (242 aa). ATP is bound at residue 35 to 42; it reads GANGAGKS.

This sequence belongs to the ABC transporter superfamily. Heme (hemin) importer (TC 3.A.1.14.5) family. As to quaternary structure, the complex is composed of two ATP-binding proteins (HmuV), two transmembrane proteins (HmuU) and a solute-binding protein (HmuT).

It localises to the cell inner membrane. In terms of biological role, part of the ABC transporter complex HmuTUV involved in hemin import. Responsible for energy coupling to the transport system. The chain is Hemin import ATP-binding protein HmuV from Bordetella parapertussis (strain 12822 / ATCC BAA-587 / NCTC 13253).